Consider the following 217-residue polypeptide: Monomethylamine corrinoid protein 2 (217 aa).

One can recognise a B12-binding N-terminal domain in the interval 1-91 (MTNTEIFEKL…ELEKSKVEGE (91 aa)). One can recognise a B12-binding domain in the interval 93 to 217 (TGLAITFVAE…AAKVALNIMK (125 aa)). His-106 is a binding site for methylcob(III)alamin.

The protein belongs to the methylamine corrinoid protein family. As to quaternary structure, can form a complex with MtmB.

It participates in one-carbon metabolism; methanogenesis from methylamine. Acts as a methyl group carrier between MtmB and MtbA. The protein is Monomethylamine corrinoid protein 2 (mtmC2) of Methanosarcina acetivorans (strain ATCC 35395 / DSM 2834 / JCM 12185 / C2A).